The chain runs to 303 residues: Putative F-box protein At5g62060 (303 aa).

One can recognise an F-box domain in the interval 27-74 (KSRYIDIPLDITVEILKKLPAKSLVRFQCVSKQWSTIIGSRRDFIDSI).

In Arabidopsis thaliana (Mouse-ear cress), this protein is Putative F-box protein At5g62060.